The primary structure comprises 476 residues: 8-amino-7-oxononanoate synthase (476 aa).

Arginine 24 lines the substrate pocket. 171-172 (GF) contributes to the pyridoxal 5'-phosphate binding site. Histidine 210 is a substrate binding site. Pyridoxal 5'-phosphate-binding positions include serine 260, 285–288 (DDAH), and 316–319 (TLSK). Lysine 319 bears the N6-(pyridoxal phosphate)lysine mark. Residue threonine 427 participates in substrate binding. Positions 474–476 (PKL) match the Peroxisomal targeting signal PTS1 motif.

Belongs to the class-II pyridoxal-phosphate-dependent aminotransferase family. BioF subfamily. As to quaternary structure, monomer. Pyridoxal 5'-phosphate serves as cofactor.

Its subcellular location is the cytoplasm. The protein resides in the cytosol. It localises to the peroxisome. It catalyses the reaction 6-carboxyhexanoyl-[ACP] + L-alanine + H(+) = (8S)-8-amino-7-oxononanoate + holo-[ACP] + CO2. It participates in cofactor biosynthesis; biotin biosynthesis; 8-amino-7-oxononanoate from pimeloyl-CoA: step 1/1. Functionally, catalyzes the decarboxylative condensation of pimeloyl-[acyl-carrier protein] and L-alanine to produce 8-amino-7-oxononanoate (AON), [acyl-carrier protein], and carbon dioxide. Required for the biosynthesis of D-biotin that prevents light-mediated cell death and modulates defense gene expression, probably by avoiding hydrogen peroxide H(2)O(2) accumulation. This is 8-amino-7-oxononanoate synthase from Arabidopsis thaliana (Mouse-ear cress).